Reading from the N-terminus, the 168-residue chain is Protein YciE (168 aa).

This Escherichia coli (strain K12) protein is Protein YciE (yciE).